The following is a 412-amino-acid chain: Candidapepsin-2 (412 aa).

Residues 1–25 (MTTIAIFTKNVLLAIAFALFAQGAA) constitute a signal peptide (or 18, or 21). The propeptide at 26–61 (IPDPAKRDDNPGFVALDFEVTRKPLDVNATSELSKR) is activation peptide. The N-linked (GlcNAc...) asparagine glycan is linked to asparagine 53. Residues 75–383 (YGIRVSVGSN…LDKETVLSRS (309 aa)) form the Peptidase A1 domain. The active site involves aspartate 93. The cysteines at positions 108 and 113 are disulfide-linked. Aspartate 273 is a catalytic residue. The cysteines at positions 311 and 345 are disulfide-linked.

Belongs to the peptidase A1 family. O-glycosylated.

The protein resides in the secreted. The catalysed reaction is Preferential cleavage at the carboxyl of hydrophobic amino acids, but fails to cleave 15-Leu-|-Tyr-16, 16-Tyr-|-Leu-17 and 24-Phe-|-Phe-25 of insulin B chain. Activates trypsinogen, and degrades keratin.. This chain is Candidapepsin-2 (SAPP2), found in Candida parapsilosis (Yeast).